Reading from the N-terminus, the 318-residue chain is NAC domain-containing protein 59 (318 aa).

In terms of domain architecture, NAC spans 24–174 (LPPGFRFHPT…ECVISRVFHT (151 aa)). The DNA-binding element occupies 121–180 (VGMKKTLVFYKGRAPKGVKTNWVMHEYRLEGKFAIDNLSKTAKNECVISRVFHTRTDGTK).

As to expression, mostly expressed in root cortex, phloem, atrichoblast and quiescent center (QC), and, to a lower extent, in root endodermis, xylem, pericycle, columella and lateral root cap (LRC). Expressed in roots, cotyledons, very young leaves, senescing leaves, mature flowers and pollen.

It localises to the nucleus. Its function is as follows. Transcription activator that binds to DNA in promoters of target genes on a specific bipartite motif 5'-[AG]CGT[AG](4-5n)[AG][CT]ACGCAA-3'. Triggers the expression of senescence-associated genes during age-, salt- and dark-induced senescence through a regulatory network that may involve cross-talk with salt- and H(2)O(2)-dependent signaling pathways. The polypeptide is NAC domain-containing protein 59 (Arabidopsis thaliana (Mouse-ear cress)).